A 163-amino-acid chain; its full sequence is NADPH-dependent 7-cyano-7-deazaguanine reductase (163 aa).

A compositionally biased stretch (basic residues) spans 1-10; that stretch reads MSKPPRRSPR. The tract at residues 1–23 is disordered; sequence MSKPPRRSPRKPTPASPELQLGH. Cys61 serves as the catalytic Thioimide intermediate. The Proton donor role is filled by Asp68. Substrate is bound by residues 83–85 and 102–103; these read LES and HE.

The protein belongs to the GTP cyclohydrolase I family. QueF type 1 subfamily.

It localises to the cytoplasm. The catalysed reaction is 7-aminomethyl-7-carbaguanine + 2 NADP(+) = 7-cyano-7-deazaguanine + 2 NADPH + 3 H(+). It functions in the pathway tRNA modification; tRNA-queuosine biosynthesis. In terms of biological role, catalyzes the NADPH-dependent reduction of 7-cyano-7-deazaguanine (preQ0) to 7-aminomethyl-7-deazaguanine (preQ1). In Rhodopseudomonas palustris (strain BisA53), this protein is NADPH-dependent 7-cyano-7-deazaguanine reductase.